The chain runs to 590 residues: Peroxisomal targeting signal receptor (590 aa).

Cys6 is covalently cross-linked (Glycyl cysteine thioester (Cys-Gly) (interchain with G-Cter in ubiquitin)). The interval 7 to 29 (SVGSNPLAQLNKHAQGQGSSLSN) is amphipathic helix 1 (AH1). Residue Lys18 forms a Glycyl lysine isopeptide (Lys-Gly) (interchain with G-Cter in ubiquitin) linkage. The span at 18 to 30 (KHAQGQGSSLSNT) shows a compositional bias: polar residues. Positions 18–45 (KHAQGQGSSLSNTHVRHSGGVSGSNVFR) are disordered. The interval 56–74 (RQQLNSFMSQPMRLGEDKM) is amphipathic helix 2 (AH2). Short sequence motifs (wxxxF/Y motif) lie at residues 108-112 (WTREF), 139-143 (WKFRY), and 178-182 (WNDKF). The segment at 227–243 (FQEVWDSIQQDTEEMLS) is amphipathic helix 4 (AH4). 5 TPR repeats span residues 285–319 (NPNAYQIGCILMENGAKLSEAALAFEAAIKQDPKH), 320–353 (VDAWLKLGIVQIQNEKELNGMSALETCLKLDPNN), 424–457 (PDIQLCLGLLFYANDEFDRTIDCFQAALKVNPND), 459–491 (LMWNRLGASLANSNRSEEAIQAYHRALQLKPSF), and 493–525 (RARYNLAVSSMNIGCYKEAAEHLLTALSMHDVE).

Belongs to the peroxisomal targeting signal receptor family. As to quaternary structure, interacts (via WxxxF/Y and LVxEF motifs) with PEX14; promoting translocation through the PEX13-PEX14 docking complex. Monoubiquitinated at Cys-6 by PEX2 during PEX5 passage through the retrotranslocation channel: monoubiquitination acts as a signal for PEX5 extraction and is required for proper export from peroxisomes and recycling. When PEX5 recycling is compromised, polyubiquitinated at Lys-18 by PEX10 during its passage through the retrotranslocation channel, leading to its degradation.

The protein resides in the cytoplasm. Its subcellular location is the cytosol. It localises to the peroxisome matrix. In terms of biological role, receptor that mediates peroxisomal import of proteins containing a C-terminal PTS1-type tripeptide peroxisomal targeting signal (SKL-type). Binds to cargo proteins containing a PTS1 peroxisomal targeting signal in the cytosol, and translocates them into the peroxisome matrix by passing through the PEX13-PEX14 docking complex along with cargo proteins. PEX5 receptor is then retrotranslocated into the cytosol, leading to release of bound cargo in the peroxisome matrix, and reset for a subsequent peroxisome import cycle. The chain is Peroxisomal targeting signal receptor (PEX5) from Candida glabrata (strain ATCC 2001 / BCRC 20586 / JCM 3761 / NBRC 0622 / NRRL Y-65 / CBS 138) (Yeast).